Reading from the N-terminus, the 332-residue chain is 2,3-diketo-L-gulonate reductase (332 aa).

Residue histidine 44 is the Proton donor of the active site. NAD(+)-binding positions include 168-174 (ITMVDMS), 224-225 (WK), and 304-306 (GHE).

The protein belongs to the LDH2/MDH2 oxidoreductase family. DlgD subfamily. Homodimer.

It localises to the cytoplasm. The catalysed reaction is 3-dehydro-L-gulonate + NAD(+) = 2,3-dioxo-L-gulonate + NADH + H(+). It catalyses the reaction 3-dehydro-L-gulonate + NADP(+) = 2,3-dioxo-L-gulonate + NADPH + H(+). Catalyzes the reduction of 2,3-diketo-L-gulonate in the presence of NADH, to form 3-keto-L-gulonate. In Salmonella typhimurium (strain LT2 / SGSC1412 / ATCC 700720), this protein is 2,3-diketo-L-gulonate reductase.